Reading from the N-terminus, the 143-residue chain is Nucleoside diphosphate kinase (143 aa).

ATP is bound by residues Lys-11, Phe-59, Arg-87, Thr-93, Arg-104, and Asn-114. His-117 functions as the Pros-phosphohistidine intermediate in the catalytic mechanism.

The protein belongs to the NDK family. Homotetramer. It depends on Mg(2+) as a cofactor.

The protein resides in the cytoplasm. It carries out the reaction a 2'-deoxyribonucleoside 5'-diphosphate + ATP = a 2'-deoxyribonucleoside 5'-triphosphate + ADP. It catalyses the reaction a ribonucleoside 5'-diphosphate + ATP = a ribonucleoside 5'-triphosphate + ADP. Functionally, major role in the synthesis of nucleoside triphosphates other than ATP. The ATP gamma phosphate is transferred to the NDP beta phosphate via a ping-pong mechanism, using a phosphorylated active-site intermediate. This chain is Nucleoside diphosphate kinase, found in Shewanella amazonensis (strain ATCC BAA-1098 / SB2B).